We begin with the raw amino-acid sequence, 65 residues long: SPbeta prophage-derived uncharacterized protein YorO (65 aa).

This Bacillus subtilis (strain 168) protein is SPbeta prophage-derived uncharacterized protein YorO (yorO).